The sequence spans 2485 residues: Tyrosine-protein phosphatase non-receptor type 13 (2485 aa).

The KIND domain occupies 3–190; the sequence is VSLAEALEVR…SGTDQLSCNS (188 aa). The interval 186–220 is disordered; the sequence is LSCNSEQKPDRSQAIRDRLRGKGLPTGRSSTSDVL. A compositionally biased stretch (basic and acidic residues) spans 192 to 205; the sequence is QKPDRSQAIRDRLR. S240 bears the Phosphoserine mark. The interval 260 to 283 is disordered; sequence SDNSGREDSENTFSPYQFKTSGPE. Polar residues predominate over residues 270-279; that stretch reads NTFSPYQFKT. Phosphoserine occurs at positions 301 and 302. A disordered region spans residues 433 to 467; the sequence is RSEASKRFESSSGLPGVDETLSQGQSQRPSRQYET. A compositionally biased stretch (polar residues) spans 452–465; sequence TLSQGQSQRPSRQY. A coiled-coil region spans residues 469 to 504; the sequence is FEGNLINQEIMLKRQEEELMQLQAKMALRQSRLSLY. The FERM domain occupies 572 to 872; the sequence is RKVNIMLLNG…YQHKFQLQMR (301 aa). Residues S890, S897, S908, S911, and S914 each carry the phosphoserine modification. 2 disordered regions span residues 947–975 and 995–1049; these read QNSS…DLSQ and TVAE…IEDP. A compositionally biased stretch (basic and acidic residues) spans 950–971; that stretch reads SKEKNDKASWEEKPREMSKSYH. The segment covering 1020–1032 has biased composition (polar residues); sequence KLNNSKSVASLNR. Phosphoserine occurs at positions 1029, 1033, and 1085. Residues 1033-1042 show a composition bias toward basic and acidic residues; that stretch reads SPERRKHESD. The PDZ 1 domain maps to 1093–1178; that stretch reads LVNLKKDAKY…EDVTLVISQP (86 aa). 2 disordered regions span residues 1227-1258 and 1273-1362; these read HISE…SLSQ and TWQE…SPPK. 3 stretches are compositionally biased toward polar residues: residues 1243 to 1258, 1273 to 1288, and 1327 to 1359; these read SLSS…SLSQ, TWQE…SVIS, and TYSS…FSSS. 2 consecutive PDZ domains span residues 1368 to 1452 and 1501 to 1588; these read EVEL…LEKG and EVKL…LCRP. Residues 1608–1630 are compositionally biased toward polar residues; that stretch reads AQVLPNSSKDSSQPSCVEQSTSS. 2 disordered regions span residues 1608-1665 and 1715-1751; these read AQVL…DLVT and PNKP…SSMD. Low complexity predominate over residues 1736 to 1749; sequence QSYQPQSESASSSS. 2 consecutive PDZ domains span residues 1788 to 1868 and 1882 to 1965; these read LITL…IGRV and PDIT…ATRN. The segment at 1971–1996 is disordered; sequence PSSKRSAVSAPKSTKGNGSYSVGSCS. A compositionally biased stretch (polar residues) spans 1973-1996; the sequence is SKRSAVSAPKSTKGNGSYSVGSCS. One can recognise a Tyrosine-protein phosphatase domain in the interval 2213–2467; that stretch reads PSKELENLQE…IFCYQVILYV (255 aa). Residues D2378, 2408–2414, and Q2452 contribute to the substrate site; that span reads CSAGIGR. The Phosphocysteine intermediate role is filled by C2408. Residues 2408 to 2414 are substrate; sequence CSAGIGR.

Belongs to the protein-tyrosine phosphatase family. Non-receptor class subfamily. In terms of assembly, interacts (via the first PDZ domain) with PLEKHA1 and PLEKHA2. Interacts (via the second PDZ domain) with TNFRSF6 (Fas receptor) (via C-terminus). Interacts (via the second PDZ domain) with TRIP6 (via the third LIM domain and C-terminus). Interacts (via the third PDZ domain) with NGFR (via C-terminal SVP motif) and PKN2 (via C-terminus). Interacts (via the second or fourth PDZ domains) with PDLIM4 (via C-terminus only or via combined C-terminus and LIM domain, but not LIM domain only). Found in a complex with PDLIM4 and TRIP6. Interacts with PDLIM4; this interaction results in dephosphorylation of SRC 'Tyr-419' by this protein leading to its inactivation. Interacts with BRD7. Interacts with RAPGEF6. Interacts with ARHGAP29. Interacts with PIK3R2; dephosphorylates PIK3R2. Interacts with FBXL2. Interacts (via the FERM domain) with ENTR1. Found in a complex with ENTR1, PTPN13 and GIT1. As to expression, expressed in keratinocytes (at protein level). Present in most tissues with the exception of the liver and skeletal muscle. Most abundant in lung, kidney and fetal brain.

Its subcellular location is the cytoplasm. It localises to the cytoskeleton. The protein localises to the nucleus. The protein resides in the cell projection. It is found in the lamellipodium. The catalysed reaction is O-phospho-L-tyrosyl-[protein] + H2O = L-tyrosyl-[protein] + phosphate. Tyrosine phosphatase which negatively regulates FAS-induced apoptosis and NGFR-mediated pro-apoptotic signaling. May regulate phosphoinositide 3-kinase (PI3K) signaling through dephosphorylation of PIK3R2. In Homo sapiens (Human), this protein is Tyrosine-protein phosphatase non-receptor type 13 (PTPN13).